The sequence spans 319 residues: MEKRMETLEQIKETLRETSKLVPDIVRAAVGLEHHYQTVELPHDDGCVKSFAAAFLRPQAQEQAHGDGEVQQAVRMESASCYVPDHDEDAHFVHDAAGVVGGYRRRVGVDAGAFSRGLMTSAFAQLVTAEPGTPVCPYTLLERAYEETLESGAQGGSTAVILSLADGNVLRWAYIGDSAFAVLRDGRVVVRSVQQQRYFNAPYYLGGRRGDEGMTVGMVGEMKVRRGDVVVAGTDGLFDNMSDAELEKVVQIGTALGFSPKNMADIIGGTAYEMSRCLLKDSPFAVEWRKQHENEEGHFYGGKVDDITVVVACIVSSDS.

A PPM-type phosphatase domain is found at 73–314 (AVRMESASCY…DDITVVVACI (242 aa)). G102, D235, and D305 together coordinate Mn(2+).

The protein belongs to the PP2C family. Mg(2+) is required as a cofactor.

It carries out the reaction O-phospho-L-seryl-[protein] + H2O = L-seryl-[protein] + phosphate. The catalysed reaction is O-phospho-L-threonyl-[protein] + H2O = L-threonyl-[protein] + phosphate. The sequence is that of Putative protein phosphatase 2C 23 from Oryza sativa subsp. japonica (Rice).